The sequence spans 1068 residues: Carbamoyl phosphate synthase large chain (1068 aa).

The segment at 1-401 (MPRNNDIKKV…ALMKAIRSLE (401 aa)) is carboxyphosphate synthetic domain. R129, R169, G175, G176, R208, I210, E215, G241, V242, H243, Q284, and E298 together coordinate ATP. In terms of domain architecture, ATP-grasp 1 spans 133-327 (KDTMEKIGEP…IAKVTAKIAL (195 aa)). Residues Q284, E298, and N300 each coordinate Mg(2+). Mn(2+)-binding residues include Q284, E298, and N300. The oligomerization domain stretch occupies residues 402 to 546 (QHVDSLMSYD…YSVFGSENEA (145 aa)). Residues 547–930 (AETNPQKKVL…ALYKAFEGAG (384 aa)) form a carbamoyl phosphate synthetic domain region. The ATP-grasp 2 domain occupies 672-862 (DEILQKTGIP…IVDLAARIIM (191 aa)). ATP is bound by residues R708, K747, L749, E753, G778, V779, H780, S781, Q821, and E833. 3 residues coordinate Mg(2+): Q821, E833, and N835. The Mn(2+) site is built by Q821, E833, and N835. Residues 931–1068 (VELPKYKQMI…PVDIATVKNL (138 aa)) form the MGS-like domain. The segment at 931-1068 (VELPKYKQMI…PVDIATVKNL (138 aa)) is allosteric domain.

Belongs to the CarB family. Composed of two chains; the small (or glutamine) chain promotes the hydrolysis of glutamine to ammonia, which is used by the large (or ammonia) chain to synthesize carbamoyl phosphate. Tetramer of heterodimers (alpha,beta)4. The cofactor is Mg(2+). Mn(2+) is required as a cofactor.

The catalysed reaction is hydrogencarbonate + L-glutamine + 2 ATP + H2O = carbamoyl phosphate + L-glutamate + 2 ADP + phosphate + 2 H(+). It catalyses the reaction hydrogencarbonate + NH4(+) + 2 ATP = carbamoyl phosphate + 2 ADP + phosphate + 2 H(+). Its pathway is amino-acid biosynthesis; L-arginine biosynthesis; carbamoyl phosphate from bicarbonate: step 1/1. The protein operates within pyrimidine metabolism; UMP biosynthesis via de novo pathway; (S)-dihydroorotate from bicarbonate: step 1/3. In terms of biological role, large subunit of the glutamine-dependent carbamoyl phosphate synthetase (CPSase). CPSase catalyzes the formation of carbamoyl phosphate from the ammonia moiety of glutamine, carbonate, and phosphate donated by ATP, constituting the first step of 2 biosynthetic pathways, one leading to arginine and/or urea and the other to pyrimidine nucleotides. The large subunit (synthetase) binds the substrates ammonia (free or transferred from glutamine from the small subunit), hydrogencarbonate and ATP and carries out an ATP-coupled ligase reaction, activating hydrogencarbonate by forming carboxy phosphate which reacts with ammonia to form carbamoyl phosphate. The polypeptide is Carbamoyl phosphate synthase large chain (Agathobacter rectalis (strain ATCC 33656 / DSM 3377 / JCM 17463 / KCTC 5835 / VPI 0990) (Eubacterium rectale)).